The chain runs to 230 residues: Large ribosomal subunit protein uL1 (230 aa).

This sequence belongs to the universal ribosomal protein uL1 family. In terms of assembly, part of the 50S ribosomal subunit.

Binds directly to 23S rRNA. The L1 stalk is quite mobile in the ribosome, and is involved in E site tRNA release. Functionally, protein L1 is also a translational repressor protein, it controls the translation of the L11 operon by binding to its mRNA. In Gluconobacter oxydans (strain 621H) (Gluconobacter suboxydans), this protein is Large ribosomal subunit protein uL1.